We begin with the raw amino-acid sequence, 82 residues long: Large ribosomal subunit protein uL23 (82 aa).

This sequence belongs to the universal ribosomal protein uL23 family. As to quaternary structure, part of the 50S ribosomal subunit. Contacts protein L29.

Functionally, binds to 23S rRNA. One of the proteins that surrounds the polypeptide exit tunnel on the outside of the ribosome. The sequence is that of Large ribosomal subunit protein uL23 from Picrophilus torridus (strain ATCC 700027 / DSM 9790 / JCM 10055 / NBRC 100828 / KAW 2/3).